Consider the following 157-residue polypeptide: Transcription elongation factor GreA (157 aa).

Belongs to the GreA/GreB family.

In terms of biological role, necessary for efficient RNA polymerase transcription elongation past template-encoded arresting sites. The arresting sites in DNA have the property of trapping a certain fraction of elongating RNA polymerases that pass through, resulting in locked ternary complexes. Cleavage of the nascent transcript by cleavage factors such as GreA or GreB allows the resumption of elongation from the new 3'terminus. GreA releases sequences of 2 to 3 nucleotides. The polypeptide is Transcription elongation factor GreA (Brucella anthropi (strain ATCC 49188 / DSM 6882 / CCUG 24695 / JCM 21032 / LMG 3331 / NBRC 15819 / NCTC 12168 / Alc 37) (Ochrobactrum anthropi)).